The sequence spans 514 residues: UDP-N-acetylmuramate--L-alanine ligase (514 aa).

127-133 contributes to the ATP binding site; the sequence is GTHGKTT. A compositionally biased stretch (low complexity) spans 495-505; it reads IGGTIPDIPGG. Positions 495–514 are disordered; that stretch reads IGGTIPDIPGGSTPDASAAG.

Belongs to the MurCDEF family.

The protein localises to the cytoplasm. It catalyses the reaction UDP-N-acetyl-alpha-D-muramate + L-alanine + ATP = UDP-N-acetyl-alpha-D-muramoyl-L-alanine + ADP + phosphate + H(+). It participates in cell wall biogenesis; peptidoglycan biosynthesis. Cell wall formation. The polypeptide is UDP-N-acetylmuramate--L-alanine ligase (Salinispora tropica (strain ATCC BAA-916 / DSM 44818 / JCM 13857 / NBRC 105044 / CNB-440)).